The following is a 674-amino-acid chain: Sodium/hydrogen exchanger 1 (674 aa).

A signal peptide spans 1–24 (MKLNKSYILIVVLLLSLFYSSVSS). The tract at residues 31 to 65 (KSNNHYNSDNSNNDNKNININNNNDGDGDDDDDNN) is disordered. Residues 37 to 55 (NSDNSNNDNKNININNNND) show a composition bias toward low complexity. The next 12 membrane-spanning stretches (helical) occupy residues 120-140 (TIIF…YFII), 144-164 (IPFV…GIVF), 175-195 (VVSF…IFET), 213-233 (MFAV…IYIV), 275-297 (LYIL…YSVV), 314-334 (VVAI…SLIL), 336-356 (WINI…FSYM), 359-379 (VLAG…GITL), 401-421 (TAAF…LTAH), 432-452 (WSIL…CFLL), 460-480 (IPWV…FAFS), and 499-519 (NTLL…YPLL). A disordered region spans residues 591–674 (HELDSNPLRF…NKNNDTLPLI (84 aa)). Acidic residues predominate over residues 601–618 (DDDEEDDDDEDLDFDSDL). Residues 627 to 657 (DSIHQSDNNNNDNGNNNNNNNNIIINNNSQH) are compositionally biased toward low complexity. A compositionally biased stretch (polar residues) spans 662-674 (GSNNKNNDTLPLI).

It belongs to the monovalent cation:proton antiporter 1 (CPA1) transporter (TC 2.A.36) family.

Its subcellular location is the membrane. Its activity is regulated as follows. LY294002, an inhibitor of the catalytic subunit of PI3-kinase, blocks NHE1-dependent (but not NHE1-independent) increase in intracellular pH in response to cAMP. Regulation of intracellular pH homeostasis in response to cAMP, which is essential for chemotaxis. Necessary for F-actin localization and the kinetics of actin polymerization during chemotaxis and cell polarity but not for directional sensing. This Dictyostelium discoideum (Social amoeba) protein is Sodium/hydrogen exchanger 1 (nhe1).